Consider the following 348-residue polypeptide: Phosphoribosylformylglycinamidine cyclo-ligase (348 aa).

The protein belongs to the AIR synthase family.

The protein resides in the cytoplasm. It carries out the reaction 2-formamido-N(1)-(5-O-phospho-beta-D-ribosyl)acetamidine + ATP = 5-amino-1-(5-phospho-beta-D-ribosyl)imidazole + ADP + phosphate + H(+). Its pathway is purine metabolism; IMP biosynthesis via de novo pathway; 5-amino-1-(5-phospho-D-ribosyl)imidazole from N(2)-formyl-N(1)-(5-phospho-D-ribosyl)glycinamide: step 2/2. In Sorangium cellulosum (strain So ce56) (Polyangium cellulosum (strain So ce56)), this protein is Phosphoribosylformylglycinamidine cyclo-ligase.